The sequence spans 475 residues: Divinyl ether synthase CYP74M1 (475 aa).

Heme is bound at residue C427.

It belongs to the cytochrome P450 family. It depends on heme as a cofactor.

The catalysed reaction is (13S)-hydroperoxy-(9Z,11E)-octadecadienoate = etheroleate + H2O. The enzyme catalyses (13S)-hydroperoxy-(9Z,11E,15Z)-octadecatrienoate = etherolenate + H2O. The protein operates within lipid metabolism; oxylipin biosynthesis. In terms of biological role, divinyl ether synthase involved in oxylipin biosynthesis. Catalyzes the conversion of (13S)-hydroperoxy-(9Z,11E)-octadecadienoate (13-HPOD) to etheroleate and (13S)-hydroperoxy-(9Z,11E,15Z)-octadecatrienoate (13-HPOT) to etherolenate. Has no activity with the corresponding 9-hydroperoxides (9-HPOD and 9-HPOT). In Selaginella moellendorffii (Spikemoss), this protein is Divinyl ether synthase CYP74M1.